Here is a 351-residue protein sequence, read N- to C-terminus: Photosystem II D2 protein (351 aa).

The chain crosses the membrane as a helical span at residues 39–59; the sequence is TAYLALGGWFTGTTFVTSWYT. A chlorophyll a-binding site is contributed by H116. Residues 123-139 form a helical membrane-spanning segment; sequence GFMLRQFEIARLVGIRP. Pheophytin a-binding residues include Q128 and N141. The chain crosses the membrane as a helical span at residues 151–164; that stretch reads VFLACFLIYPLGQH. Residue H196 participates in chlorophyll a binding. A helical transmembrane segment spans residues 206–226; sequence GALLCGIHGATVQNTLFEDGA. A plastoquinone-binding residues include H213 and F260. Residue H213 participates in Fe cation binding. Residue H267 coordinates Fe cation. Residues 277–293 form a helical membrane-spanning segment; the sequence is GMWTPSVGIVGLAVNLR.

The protein belongs to the reaction center PufL/M/PsbA/D family. As to quaternary structure, PSII is composed of 1 copy each of membrane proteins PsbA, PsbB, PsbC, PsbD, PsbE, PsbF, PsbH, PsbI, PsbJ, PsbK, PsbL, PsbM, PsbT, PsbX, PsbY, Psb30/Ycf12, peripheral proteins PsbO, CyanoQ (PsbQ), PsbU, PsbV and a large number of cofactors. It forms dimeric complexes. It depends on The D1/D2 heterodimer binds P680, chlorophylls that are the primary electron donor of PSII, and subsequent electron acceptors. It shares a non-heme iron and each subunit binds pheophytin, quinone, additional chlorophylls, carotenoids and lipids. There is also a Cl(-1) ion associated with D1 and D2, which is required for oxygen evolution. The PSII complex binds additional chlorophylls, carotenoids and specific lipids. as a cofactor.

The protein resides in the cellular thylakoid membrane. The catalysed reaction is 2 a plastoquinone + 4 hnu + 2 H2O = 2 a plastoquinol + O2. Its function is as follows. Photosystem II (PSII) is a light-driven water:plastoquinone oxidoreductase that uses light energy to abstract electrons from H(2)O, generating O(2) and a proton gradient subsequently used for ATP formation. It consists of a core antenna complex that captures photons, and an electron transfer chain that converts photonic excitation into a charge separation. The D1/D2 (PsbA/PsbD) reaction center heterodimer binds P680, the primary electron donor of PSII as well as several subsequent electron acceptors. D2 is needed for assembly of a stable PSII complex. The polypeptide is Photosystem II D2 protein (Prochlorococcus marinus (strain MIT 9313)).